The sequence spans 418 residues: Translation initiation factor 2 subunit gamma (418 aa).

A tr-type G domain is found at 7 to 206 (QPEVNIGVVG…GIQKYIPTPQ (200 aa)). Residues 16 to 23 (GHVDHGKT) form a G1 region. Residues Asp19, Thr23, Gly44, and Thr46 each contribute to the Mg(2+) site. 19–24 (DHGKTT) provides a ligand contact to GTP. Positions 44–48 (GMTIK) are G2. Zn(2+) is bound by residues Cys59, Cys62, Cys74, and Cys77. The tract at residues 93–96 (DAPG) is G3. Residues 149–152 (NKVD) and 184–186 (SAL) each bind GTP. The interval 149 to 152 (NKVD) is G4. The G5 stretch occupies residues 184 to 186 (SAL).

This sequence belongs to the TRAFAC class translation factor GTPase superfamily. Classic translation factor GTPase family. EIF2G subfamily. As to quaternary structure, heterotrimer composed of an alpha, a beta and a gamma chain. Mg(2+) is required as a cofactor.

The enzyme catalyses GTP + H2O = GDP + phosphate + H(+). EIF-2 functions in the early steps of protein synthesis by forming a ternary complex with GTP and initiator tRNA. This Sulfurisphaera tokodaii (strain DSM 16993 / JCM 10545 / NBRC 100140 / 7) (Sulfolobus tokodaii) protein is Translation initiation factor 2 subunit gamma.